Consider the following 276-residue polypeptide: Proteasome subunit beta type-8 (276 aa).

Residues 1-33 (MALLDVCGAPRGQRPESALPVAGSGRRSDPGHY) form a disordered region. Residues 1–72 (MALLDVCGAP…RNVQIEMAHG (72 aa)) constitute a propeptide, removed in mature form. At D5 the chain carries Phosphothreonine. T73 acts as the Nucleophile in catalysis.

The protein belongs to the peptidase T1B family. The 26S proteasome consists of a 20S proteasome core and two 19S regulatory subunits. The 20S proteasome core is composed of 28 subunits that are arranged in four stacked rings, resulting in a barrel-shaped structure. The two end rings are each formed by seven alpha subunits, and the two central rings are each formed by seven beta subunits. The catalytic chamber with the active sites is on the inside of the barrel. Component of the immunoproteasome, where it displaces the equivalent housekeeping subunit PSMB5. Component of the spermatoproteasome, a form of the proteasome specifically found in testis. Directly interacts with POMP. Interacts with TAP1. As to quaternary structure, (Microbial infection) Interacts with HIV-1 TAT protein. Post-translationally, autocleaved. The resulting N-terminal Thr residue of the mature subunit is responsible for the nucleophile proteolytic activity.

It localises to the cytoplasm. The protein resides in the nucleus. It carries out the reaction Cleavage of peptide bonds with very broad specificity.. The proteasome is a multicatalytic proteinase complex which is characterized by its ability to cleave peptides with Arg, Phe, Tyr, Leu, and Glu adjacent to the leaving group at neutral or slightly basic pH. The proteasome has an ATP-dependent proteolytic activity. This subunit is involved in antigen processing to generate class I binding peptides. Replacement of PSMB5 by PSMB8 increases the capacity of the immunoproteasome to cleave model peptides after hydrophobic and basic residues. Involved in the generation of spliced peptides resulting from the ligation of two separate proteasomal cleavage products that are not contiguous in the parental protein. Acts as a major component of interferon gamma-induced sensitivity. Plays a key role in apoptosis via the degradation of the apoptotic inhibitor MCL1. May be involved in the inflammatory response pathway. In cancer cells, substitution of isoform 1 (E2) by isoform 2 (E1) results in immunoproteasome deficiency. Required for the differentiation of preadipocytes into adipocytes. In Homo sapiens (Human), this protein is Proteasome subunit beta type-8 (PSMB8).